We begin with the raw amino-acid sequence, 225 residues long: 7-carboxy-7-deazaguanine synthase (225 aa).

Residues leucine 14–glycine 16 and arginine 29 each bind substrate. Residues histidine 20–leucine 225 form the Radical SAM core domain. 3 residues coordinate [4Fe-4S] cluster: cysteine 33, cysteine 37, and cysteine 40. Threonine 42 contacts Mg(2+). Residue threonine 77 participates in substrate binding. Residues glycine 79 and serine 127–lysine 129 each bind S-adenosyl-L-methionine.

This sequence belongs to the radical SAM superfamily. 7-carboxy-7-deazaguanine synthase family. In terms of assembly, homodimer. Requires [4Fe-4S] cluster as cofactor. It depends on S-adenosyl-L-methionine as a cofactor. The cofactor is Mg(2+).

The catalysed reaction is 6-carboxy-5,6,7,8-tetrahydropterin + H(+) = 7-carboxy-7-deazaguanine + NH4(+). It functions in the pathway purine metabolism; 7-cyano-7-deazaguanine biosynthesis. Functionally, catalyzes the complex heterocyclic radical-mediated conversion of 6-carboxy-5,6,7,8-tetrahydropterin (CPH4) to 7-carboxy-7-deazaguanine (CDG), a step common to the biosynthetic pathways of all 7-deazapurine-containing compounds. The polypeptide is 7-carboxy-7-deazaguanine synthase (Prochlorococcus marinus (strain SARG / CCMP1375 / SS120)).